We begin with the raw amino-acid sequence, 477 residues long: Bifunctional protein HldE (477 aa).

The segment at 1-319 is ribokinase; that stretch reads MTPPLPGFRD…AALGGGPAPA (319 aa). 195–198 provides a ligand contact to ATP; that stretch reads NLAE. Asp-264 is a catalytic residue. The segment at 346–477 is cytidylyltransferase; it reads MTNGCFDLLH…DLIARIRSRG (132 aa).

This sequence in the N-terminal section; belongs to the carbohydrate kinase PfkB family. It in the C-terminal section; belongs to the cytidylyltransferase family. As to quaternary structure, homodimer.

It carries out the reaction D-glycero-beta-D-manno-heptose 7-phosphate + ATP = D-glycero-beta-D-manno-heptose 1,7-bisphosphate + ADP + H(+). The catalysed reaction is D-glycero-beta-D-manno-heptose 1-phosphate + ATP + H(+) = ADP-D-glycero-beta-D-manno-heptose + diphosphate. It participates in nucleotide-sugar biosynthesis; ADP-L-glycero-beta-D-manno-heptose biosynthesis; ADP-L-glycero-beta-D-manno-heptose from D-glycero-beta-D-manno-heptose 7-phosphate: step 1/4. Its pathway is nucleotide-sugar biosynthesis; ADP-L-glycero-beta-D-manno-heptose biosynthesis; ADP-L-glycero-beta-D-manno-heptose from D-glycero-beta-D-manno-heptose 7-phosphate: step 3/4. Catalyzes the phosphorylation of D-glycero-D-manno-heptose 7-phosphate at the C-1 position to selectively form D-glycero-beta-D-manno-heptose-1,7-bisphosphate. In terms of biological role, catalyzes the ADP transfer from ATP to D-glycero-beta-D-manno-heptose 1-phosphate, yielding ADP-D-glycero-beta-D-manno-heptose. The protein is Bifunctional protein HldE of Halorhodospira halophila (strain DSM 244 / SL1) (Ectothiorhodospira halophila (strain DSM 244 / SL1)).